The following is a 260-amino-acid chain: Alpha-acetolactate decarboxylase (260 aa).

Belongs to the alpha-acetolactate decarboxylase family.

The catalysed reaction is (2S)-2-acetolactate + H(+) = (R)-acetoin + CO2. The protein operates within polyol metabolism; (R,R)-butane-2,3-diol biosynthesis; (R,R)-butane-2,3-diol from pyruvate: step 2/3. In terms of biological role, converts acetolactate into acetoin. The protein is Alpha-acetolactate decarboxylase (budA) of Methylococcus capsulatus (strain ATCC 33009 / NCIMB 11132 / Bath).